Reading from the N-terminus, the 445-residue chain is Phosphoglucosamine mutase (445 aa).

Residue Ser102 is the Phosphoserine intermediate of the active site. Mg(2+) contacts are provided by Ser102, Asp241, Asp243, and Asp245. Position 102 is a phosphoserine (Ser102).

This sequence belongs to the phosphohexose mutase family. Mg(2+) is required as a cofactor. Activated by phosphorylation.

The catalysed reaction is alpha-D-glucosamine 1-phosphate = D-glucosamine 6-phosphate. Catalyzes the conversion of glucosamine-6-phosphate to glucosamine-1-phosphate. This is Phosphoglucosamine mutase from Rhodococcus opacus (strain B4).